We begin with the raw amino-acid sequence, 577 residues long: Probable HECT-type ubiquitin ligase-interacting protein creD (577 aa).

Disordered stretches follow at residues 376 to 398 and 428 to 566; these read LDPAGYRTPGPGSGPGTPFGTLS and NLHA…EEER. 2 stretches are compositionally biased toward polar residues: residues 428–447 and 460–472; these read NLHASRHSNPSPSESENQLE and SSGSNTHSLTSPE. Basic and acidic residues predominate over residues 473-486; sequence LSRRPSDEVDHDHV. Polar residues predominate over residues 528-544; it reads SPQQAHVRSANRSSSYF.

Belongs to the arrestin family. In terms of assembly, interacts with hulA.

In terms of biological role, component of the regulatory network controlling carbon source utilization through ubiquitination and deubiquitination involving creA, creB, creC, creD and acrB. May be involved in signaling by recognizing appropriately phosphorylated substrates via its arrestin domains and then recruit a HECT-type ubiquitin ligase such as hulA, leading to ubiquitination of the substrate, providing a link between ubiquitination and phosphorylation in protein regulation and stability. In Aspergillus terreus (strain NIH 2624 / FGSC A1156), this protein is Probable HECT-type ubiquitin ligase-interacting protein creD (creD).